A 143-amino-acid chain; its full sequence is Interleukin-3 (143 aa).

Residues 1–19 (MSRLPVLLLLHLLVSPGLQ) form the signal peptide. A disulfide bridge connects residues C35 and C103. Residue N89 is glycosylated (N-linked (GlcNAc...) asparagine).

It belongs to the IL-3 family. In terms of assembly, monomer. In terms of tissue distribution, activated T-cells, mast cells, natural killer cells.

The protein resides in the secreted. Granulocyte/macrophage colony-stimulating factors are cytokines that act in hematopoiesis by controlling the production, differentiation, and function of 2 related white cell populations of the blood, the granulocytes and the monocytes-macrophages. Its function is as follows. This CSF induces granulocytes, macrophages, mast cells, stem cells, erythroid cells, eosinophils and megakaryocytes. This chain is Interleukin-3 (IL3), found in Macaca mulatta (Rhesus macaque).